A 258-amino-acid polypeptide reads, in one-letter code: MADERVSARGGMETSFGFREVGTGEKQPLVNDVFHKVAKRYDIMNDVMSAGLHRVWKDAMIAALNPPGREDYRVLDVAGGTGDIAFRIVERSGRKAHATVLDINGSMLSVGAERARKKGIEANLDFVEANAEDLPFAANSFDAYTIAFGIRNVPRIEVALKEAYRVLKRGGRLLVLEFSEVEMPLLDRFYDAWSFNAIPKFGKLITGDDAPYQYLVESIRKFPNQRDFAAMIRDAGFARVSFTNYTGGIAALHSGWKI.

S-adenosyl-L-methionine is bound by residues Thr-81, Asp-102, and 130–131 (NA).

Belongs to the class I-like SAM-binding methyltransferase superfamily. MenG/UbiE family.

It carries out the reaction a 2-demethylmenaquinol + S-adenosyl-L-methionine = a menaquinol + S-adenosyl-L-homocysteine + H(+). It catalyses the reaction a 2-methoxy-6-(all-trans-polyprenyl)benzene-1,4-diol + S-adenosyl-L-methionine = a 5-methoxy-2-methyl-3-(all-trans-polyprenyl)benzene-1,4-diol + S-adenosyl-L-homocysteine + H(+). The protein operates within quinol/quinone metabolism; menaquinone biosynthesis; menaquinol from 1,4-dihydroxy-2-naphthoate: step 2/2. Its pathway is cofactor biosynthesis; ubiquinone biosynthesis. Its function is as follows. Methyltransferase required for the conversion of demethylmenaquinol (DMKH2) to menaquinol (MKH2) and the conversion of 2-polyprenyl-6-methoxy-1,4-benzoquinol (DDMQH2) to 2-polyprenyl-3-methyl-6-methoxy-1,4-benzoquinol (DMQH2). This chain is Ubiquinone/menaquinone biosynthesis C-methyltransferase UbiE, found in Rhizobium meliloti (strain 1021) (Ensifer meliloti).